We begin with the raw amino-acid sequence, 226 residues long: MAPAKGSSLTPIQVENLQFPASVTSPATAKSYFLGGAGERGLTIEGKFIKFTGIGVYLEDTAVDSLATKWKGKSSQELQDSLDFFRDIISSPSEKLIRGSKLRPLSGVEYSRKVMENCVAHMKSAGTYGEAEATAIEKFAEAFRKVDFPPGSSVFYRQSTDGKLGLSFSLDDTIPEEEAVVIENKALSEAVLETMIGEHAVSPDLKRCLAERLPIVMNQGLLLTGN.

Substrate-binding residues include T52, N117, and T194.

It belongs to the chalcone isomerase family.

It carries out the reaction a chalcone = a flavanone.. The protein operates within secondary metabolite biosynthesis; flavonoid biosynthesis. Its function is as follows. Catalyzes the intramolecular cyclization of bicyclic chalcones into tricyclic (S)-flavanones. Responsible for the isomerization of 4,2',4',6'-tetrahydroxychalcone (also termed chalcone) into naringenin. This is Chalcone--flavanone isomerase 1 (CHI1) from Lotus japonicus (Lotus corniculatus var. japonicus).